A 296-amino-acid chain; its full sequence is ATP synthase gamma chain (296 aa).

Residues 194–216 form a disordered region; that stretch reads IPASAGQAANDNAGSDQPAGDYE.

The protein belongs to the ATPase gamma chain family. In terms of assembly, F-type ATPases have 2 components, CF(1) - the catalytic core - and CF(0) - the membrane proton channel. CF(1) has five subunits: alpha(3), beta(3), gamma(1), delta(1), epsilon(1). CF(0) has three main subunits: a, b and c.

The protein resides in the cell inner membrane. Its function is as follows. Produces ATP from ADP in the presence of a proton gradient across the membrane. The gamma chain is believed to be important in regulating ATPase activity and the flow of protons through the CF(0) complex. The chain is ATP synthase gamma chain from Acidiphilium cryptum (strain JF-5).